Reading from the N-terminus, the 244-residue chain is 7-cyano-7-deazaguanine synthase (244 aa).

Position 14 to 24 (14 to 24 (FSGGQDSATCV)) interacts with ATP. 4 residues coordinate Zn(2+): cysteine 202, cysteine 217, cysteine 220, and cysteine 223.

The protein belongs to the QueC family. Requires Zn(2+) as cofactor.

It carries out the reaction 7-carboxy-7-deazaguanine + NH4(+) + ATP = 7-cyano-7-deazaguanine + ADP + phosphate + H2O + H(+). Its pathway is purine metabolism; 7-cyano-7-deazaguanine biosynthesis. Its function is as follows. Catalyzes the ATP-dependent conversion of 7-carboxy-7-deazaguanine (CDG) to 7-cyano-7-deazaguanine (preQ(0)). This is 7-cyano-7-deazaguanine synthase from Burkholderia thailandensis (strain ATCC 700388 / DSM 13276 / CCUG 48851 / CIP 106301 / E264).